An 827-amino-acid polypeptide reads, in one-letter code: Periplasmic nitrate reductase (827 aa).

The tat-type signal signal peptide spans 1-34 (MSLTRRDFIKANAVPATAAAAGLATPAIAQPAKA). One can recognise a 4Fe-4S Mo/W bis-MGD-type domain in the interval 36–92 (IRWDKGVCRFCGTGCSVLVGVQDGRVVATQGDPDSPVNRGLNCIKGYFLSKIMYGED). [4Fe-4S] cluster is bound by residues Cys-43, Cys-46, Cys-50, and Cys-78. Mo-bis(molybdopterin guanine dinucleotide) contacts are provided by residues Lys-80, Gln-148, Asn-173, Cys-177, 210-217 (WGSNMAEM), 241-245 (STFEH), 260-262 (QTD), Met-371, Gln-375, Asn-481, 507-508 (SD), Lys-530, Asp-557, and 717-726 (TGRVLEHWHS). Position 793 (Phe-793) interacts with substrate. The Mo-bis(molybdopterin guanine dinucleotide) site is built by Asn-801 and Lys-818.

It belongs to the prokaryotic molybdopterin-containing oxidoreductase family. NasA/NapA/NarB subfamily. Component of the periplasmic nitrate reductase NapAB complex composed of NapA and NapB. [4Fe-4S] cluster serves as cofactor. Mo-bis(molybdopterin guanine dinucleotide) is required as a cofactor. In terms of processing, predicted to be exported by the Tat system. The position of the signal peptide cleavage has not been experimentally proven.

The protein localises to the periplasm. It catalyses the reaction 2 Fe(II)-[cytochrome] + nitrate + 2 H(+) = 2 Fe(III)-[cytochrome] + nitrite + H2O. Functionally, catalytic subunit of the periplasmic nitrate reductase complex NapAB. Receives electrons from NapB and catalyzes the reduction of nitrate to nitrite. This chain is Periplasmic nitrate reductase, found in Paramagnetospirillum magnetotacticum (Aquaspirillum magnetotacticum).